A 317-amino-acid chain; its full sequence is MAVMNHLRVILQVSSSTLPWRRCWVPRLVPRRSCSLYTCTYRTRNRALPPLWENLDLVPAGDRQSPINIRWRDSVYDPGLKPLTISYDPATCLHIWNNGYSFLVEFEDSTDKSVVEGGPLEHNYRLKQFHFHWGAIDAWGSEHTVDSKCYPAELHLVHWNAVKFESFEDAALEENGLAVIGVFLKLGKHHKELQKLVDTLPSIKHKDTLVEFGSFDPSCLMPTCPDYWTYSGSLTTPPLSESVTWIIKKQPVEVDRDQLEQFRTLLFTSEGEKEKRMVDNFRPLQPLMNRTVRSSFRHDYVLNIQVKPKPTASEVTP.

A mitochondrion-targeting transit peptide spans 1-33 (MAVMNHLRVILQVSSSTLPWRRCWVPRLVPRRS). Positions 37 to 296 (YTCTYRTRNR…LMNRTVRSSF (260 aa)) constitute an Alpha-carbonic anhydrase domain. Positions 130, 132, and 155 each coordinate Zn(2+). Residue 235-236 (TT) coordinates substrate.

The protein belongs to the alpha-carbonic anhydrase family. It depends on Zn(2+) as a cofactor. Expressed in the heart, liver, lung, kidney, testis, and skeletal muscle (at protein level).

The protein resides in the mitochondrion. It carries out the reaction hydrogencarbonate + H(+) = CO2 + H2O. In terms of biological role, mitochondrial carbonic anhydrase that catalyzes the reversible conversion of carbon dioxide to bicarbonate/HCO3. This chain is Carbonic anhydrase 5B, mitochondrial (Ca5b), found in Mus musculus (Mouse).